Reading from the N-terminus, the 208-residue chain is FMN-dependent NADH:quinone oxidoreductase 4 (208 aa).

It belongs to the azoreductase type 1 family. As to quaternary structure, homodimer. FMN is required as a cofactor.

The catalysed reaction is 2 a quinone + NADH + H(+) = 2 a 1,4-benzosemiquinone + NAD(+). The enzyme catalyses N,N-dimethyl-1,4-phenylenediamine + anthranilate + 2 NAD(+) = 2-(4-dimethylaminophenyl)diazenylbenzoate + 2 NADH + 2 H(+). Functionally, quinone reductase that provides resistance to thiol-specific stress caused by electrophilic quinones. Its function is as follows. Also exhibits azoreductase activity. Catalyzes the reductive cleavage of the azo bond in aromatic azo compounds to the corresponding amines. In Bacillus cereus (strain ATCC 10987 / NRS 248), this protein is FMN-dependent NADH:quinone oxidoreductase 4.